We begin with the raw amino-acid sequence, 925 residues long: NADH:fumarate oxidoreductase (925 aa).

T447 is subject to FMN phosphoryl threonine. Residues A492, E511, N519, T520, A525, G526, and V633 each coordinate FAD. A525 serves as a coordination point for fumarate. A525 lines the succinate pocket. Residues H719, S731, and E732 each coordinate succinate. Residues S731 and E732 each coordinate fumarate. Catalysis depends on R756, which acts as the Proton donor. H859 serves as a coordination point for fumarate. H859 lines the succinate pocket. Residues H860 and E889 each coordinate FAD. R899 and G902 together coordinate fumarate. Succinate contacts are provided by R899 and G902. FAD contacts are provided by A904 and V905.

Belongs to the FAD-dependent oxidoreductase 2 family. FRD/SDH subfamily. As to quaternary structure, monomer. The cofactor is FAD. Requires FMN as cofactor. In terms of processing, is flavinylated on Thr-447 by ApbE2, encoded in a neighboring gene. Flavinylation is essential for catalytic activity.

Its subcellular location is the cytoplasm. The enzyme catalyses succinate + NAD(+) = fumarate + NADH + H(+). Functionally, catalyzes the anaerobic reduction of fumarate to succinate. Uses NADH as the inherent electron donor in this process. Is involved in anaerobic fumarate respiration in K.pneumoniae. The chain is NADH:fumarate oxidoreductase from Klebsiella pneumoniae (strain 342).